The primary structure comprises 336 residues: Ketol-acid reductoisomerase (NADP(+)) (336 aa).

The KARI N-terminal Rossmann domain occupies 1-182 (MAVIYYDKDA…GVTRAGVIET (182 aa)). NADP(+) contacts are provided by residues 25 to 28 (YGSQ), Arg48, Ser51, Ser53, and 83 to 86 (DEHQ). His108 is an active-site residue. Gly134 is a binding site for NADP(+). The 146-residue stretch at 183-328 (TFKEETETDL…KELRKMMPWL (146 aa)) folds into the KARI C-terminal knotted domain. Asp191, Glu195, Glu227, and Glu231 together coordinate Mg(2+). Residue Ser252 participates in substrate binding.

Belongs to the ketol-acid reductoisomerase family. Requires Mg(2+) as cofactor.

It catalyses the reaction (2R)-2,3-dihydroxy-3-methylbutanoate + NADP(+) = (2S)-2-acetolactate + NADPH + H(+). The catalysed reaction is (2R,3R)-2,3-dihydroxy-3-methylpentanoate + NADP(+) = (S)-2-ethyl-2-hydroxy-3-oxobutanoate + NADPH + H(+). The protein operates within amino-acid biosynthesis; L-isoleucine biosynthesis; L-isoleucine from 2-oxobutanoate: step 2/4. It functions in the pathway amino-acid biosynthesis; L-valine biosynthesis; L-valine from pyruvate: step 2/4. Its function is as follows. Involved in the biosynthesis of branched-chain amino acids (BCAA). Catalyzes an alkyl-migration followed by a ketol-acid reduction of (S)-2-acetolactate (S2AL) to yield (R)-2,3-dihydroxy-isovalerate. In the isomerase reaction, S2AL is rearranged via a Mg-dependent methyl migration to produce 3-hydroxy-3-methyl-2-ketobutyrate (HMKB). In the reductase reaction, this 2-ketoacid undergoes a metal-dependent reduction by NADPH to yield (R)-2,3-dihydroxy-isovalerate. The protein is Ketol-acid reductoisomerase (NADP(+)) of Thermotoga maritima (strain ATCC 43589 / DSM 3109 / JCM 10099 / NBRC 100826 / MSB8).